We begin with the raw amino-acid sequence, 283 residues long: Bis(5'-nucleosyl)-tetraphosphatase, symmetrical (283 aa).

This sequence belongs to the Ap4A hydrolase family.

The enzyme catalyses P(1),P(4)-bis(5'-adenosyl) tetraphosphate + H2O = 2 ADP + 2 H(+). Functionally, hydrolyzes diadenosine 5',5'''-P1,P4-tetraphosphate to yield ADP. The sequence is that of Bis(5'-nucleosyl)-tetraphosphatase, symmetrical from Pseudomonas aeruginosa (strain LESB58).